The following is a 317-amino-acid chain: Nuclear distribution protein nudE homolog (317 aa).

Residues 29 to 180 are a coiled coil; the sequence is TDVKQEYDEF…LKQELNVKSR (152 aa). Residues 186–205 are disordered; that stretch reads NGTSVPTANDTNTVNSSMNS.

The protein belongs to the nudE family.

Its subcellular location is the cytoplasm. The protein resides in the cytoskeleton. The protein localises to the microtubule organizing center. It is found in the centrosome. It localises to the spindle. Chaperone protein with functions in nuclear localization. Required for centrosome duplication and formation and function of the mitotic spindle. In postmitotic neurons, acts with nudC downstream of dar1 to ensure correct positioning of the nuclei in primary dendrites and as a consequence, is required for determining multipolar neuron morphology. This is Nuclear distribution protein nudE homolog from Drosophila melanogaster (Fruit fly).